A 227-amino-acid chain; its full sequence is tRNA (guanine-N(1)-)-methyltransferase (227 aa).

Residues glycine 112 and leucine 132–leucine 137 each bind S-adenosyl-L-methionine.

It belongs to the RNA methyltransferase TrmD family. Homodimer.

The protein resides in the cytoplasm. It carries out the reaction guanosine(37) in tRNA + S-adenosyl-L-methionine = N(1)-methylguanosine(37) in tRNA + S-adenosyl-L-homocysteine + H(+). In terms of biological role, specifically methylates guanosine-37 in various tRNAs. This is tRNA (guanine-N(1)-)-methyltransferase from Gloeobacter violaceus (strain ATCC 29082 / PCC 7421).